The primary structure comprises 365 residues: tRNA 2-selenouridine synthase (365 aa).

Positions 12–136 constitute a Rhodanese domain; it reads FLDDVPMMDM…LRTFLLDTTQ (125 aa). C95 serves as the catalytic S-selanylcysteine intermediate.

This sequence belongs to the SelU family. In terms of assembly, monomer.

The enzyme catalyses 5-methylaminomethyl-2-thiouridine(34) in tRNA + selenophosphate + (2E)-geranyl diphosphate + H2O + H(+) = 5-methylaminomethyl-2-selenouridine(34) in tRNA + (2E)-thiogeraniol + phosphate + diphosphate. It catalyses the reaction 5-methylaminomethyl-2-thiouridine(34) in tRNA + (2E)-geranyl diphosphate = 5-methylaminomethyl-S-(2E)-geranyl-thiouridine(34) in tRNA + diphosphate. The catalysed reaction is 5-methylaminomethyl-S-(2E)-geranyl-thiouridine(34) in tRNA + selenophosphate + H(+) = 5-methylaminomethyl-2-(Se-phospho)selenouridine(34) in tRNA + (2E)-thiogeraniol. It carries out the reaction 5-methylaminomethyl-2-(Se-phospho)selenouridine(34) in tRNA + H2O = 5-methylaminomethyl-2-selenouridine(34) in tRNA + phosphate. In terms of biological role, involved in the post-transcriptional modification of the uridine at the wobble position (U34) of tRNA(Lys), tRNA(Glu) and tRNA(Gln). Catalyzes the conversion of 2-thiouridine (S2U-RNA) to 2-selenouridine (Se2U-RNA). Acts in a two-step process involving geranylation of 2-thiouridine (S2U) to S-geranyl-2-thiouridine (geS2U) and subsequent selenation of the latter derivative to 2-selenouridine (Se2U) in the tRNA chain. This is tRNA 2-selenouridine synthase from Pseudomonas putida (strain W619).